The primary structure comprises 313 residues: Aspartate carbamoyltransferase catalytic subunit (313 aa).

Carbamoyl phosphate-binding residues include arginine 55 and threonine 56. Lysine 83 is a binding site for L-aspartate. Residues arginine 105, histidine 138, and glutamine 141 each coordinate carbamoyl phosphate. L-aspartate contacts are provided by arginine 171 and arginine 225. The carbamoyl phosphate site is built by glycine 266 and proline 267.

This sequence belongs to the aspartate/ornithine carbamoyltransferase superfamily. ATCase family. In terms of assembly, heterododecamer (2C3:3R2) of six catalytic PyrB chains organized as two trimers (C3), and six regulatory PyrI chains organized as three dimers (R2).

The enzyme catalyses carbamoyl phosphate + L-aspartate = N-carbamoyl-L-aspartate + phosphate + H(+). It functions in the pathway pyrimidine metabolism; UMP biosynthesis via de novo pathway; (S)-dihydroorotate from bicarbonate: step 2/3. Its function is as follows. Catalyzes the condensation of carbamoyl phosphate and aspartate to form carbamoyl aspartate and inorganic phosphate, the committed step in the de novo pyrimidine nucleotide biosynthesis pathway. The chain is Aspartate carbamoyltransferase catalytic subunit from Corynebacterium diphtheriae (strain ATCC 700971 / NCTC 13129 / Biotype gravis).